Here is a 31-residue protein sequence, read N- to C-terminus: Sarcolipin (31 aa).

Over 1-7 (MERSTQE) the chain is Cytoplasmic. Residues 8–26 (LFINFTVVLITVLLMWLLV) traverse the membrane as a helical segment. Residues 27 to 31 (RSYQY) are Lumenal-facing.

The protein belongs to the sarcolipin family. In terms of assembly, homooligomer. Can also form heterooligomers with other sarcoplasmic/endoplasmic reticulum calcium ATPase (SERCA) regulators ARLN, ERLN, PLN and STRIT1/DWORF. Monomer. Interacts with calcium ATPase ATP2A1/SERCA1. Interacts as a monomer with ATP2A2/SERCA2; the interaction decreases ATP2A2 Ca(2+) affinity. Interacts with VMP1; VMP1 competes with PLN and SLN to prevent them from forming an inhibitory complex with ATP2A2.

Its subcellular location is the sarcoplasmic reticulum membrane. The protein resides in the endoplasmic reticulum membrane. In terms of biological role, reversibly inhibits the activity of ATP2A1/SERCA1 and ATP2A2/SERCA2 in sarcoplasmic reticulum by decreasing the apparent affinity of the ATPase for Ca(2+). Also inhibits the activity of ATP2A3/SERCA3. Modulates calcium re-uptake during muscle relaxation and plays an important role in calcium homeostasis in muscle. Required for muscle-based, non-shivering thermogenesis. The protein is Sarcolipin (Sln) of Rattus norvegicus (Rat).